The sequence spans 358 residues: S-adenosylmethionine:tRNA ribosyltransferase-isomerase (358 aa).

It belongs to the QueA family. As to quaternary structure, monomer.

Its subcellular location is the cytoplasm. It catalyses the reaction 7-aminomethyl-7-carbaguanosine(34) in tRNA + S-adenosyl-L-methionine = epoxyqueuosine(34) in tRNA + adenine + L-methionine + 2 H(+). It functions in the pathway tRNA modification; tRNA-queuosine biosynthesis. Functionally, transfers and isomerizes the ribose moiety from AdoMet to the 7-aminomethyl group of 7-deazaguanine (preQ1-tRNA) to give epoxyqueuosine (oQ-tRNA). The polypeptide is S-adenosylmethionine:tRNA ribosyltransferase-isomerase (Chelativorans sp. (strain BNC1)).